A 244-amino-acid polypeptide reads, in one-letter code: Haloacid dehalogenase-like hydrolase domain-containing protein Sgpp (244 aa).

Asp28 (nucleophile) is an active-site residue. Mg(2+)-binding residues include Asp28, Asp30, and Asp189. Asp30 functions as the Proton donor in the catalytic mechanism.

The protein belongs to the HAD-like hydrolase superfamily. DOG/GPP family. Mg(2+) serves as cofactor. In terms of tissue distribution, ubiquitous with highest expression in flowers.

In terms of biological role, acts as a phosphosugar phosphatase on a broad range of sugar phosphate substrates with preferential activity on D-ribose-5-phosphate, 2-deoxy-D-ribose-5-phosphate, 2-deoxy-D-glucose-6-phosphate, and D-mannose-6-phosphate and with a lower activity on D-fructose-1-phosphate, D-glucose-6-phosphate, DL-glycerol-3-phosphate, and D-fructose-6-phosphate. This chain is Haloacid dehalogenase-like hydrolase domain-containing protein Sgpp (SGPP), found in Arabidopsis thaliana (Mouse-ear cress).